The following is a 353-amino-acid chain: MTVELMMSSYSGGGGGGDGFPAIAAAAKMEDTALREAASAGIHGVEEFLKLIGQSQQPTEKSQTEITAVTDVAVNSFKKVISLLGRSRTGHARFRRAPASTQTPFKQTPVVEEEVEVEEKKPETSSVLTKQKTEQYHGGGSAFRVYCPTPIHRRPPLSHNNNNNQNQTKNGSSSSSPPMLANGAPSTINFAPSPPVSATNSFMSSHRCDTDSTHMSSGFEFTNPSQLSGSRGKPPLSSASLKRRCNSSPSSRCHCSKKRKSRVKRVIRVPAVSSKMADIPSDEFSWRKYGQKPIKGSPHPRGYYKCSSVRGCPARKHVERALDDAMMLIVTYEGDHNHALVLETTTMNHDKTL.

Residues 117-259 (VEEKKPETSS…SSRCHCSKKR (143 aa)) are disordered. Over residues 158-176 (SHNNNNNQNQTKNGSSSSS) the composition is skewed to low complexity. Polar residues-rich tracts occupy residues 184-204 (APST…SFMS) and 213-229 (THMS…QLSG). The segment at residues 275-341 (KMADIPSDEF…YEGDHNHALV (67 aa)) is a DNA-binding region (WRKY).

Belongs to the WRKY group II-d family. In young, mature and senescent leaves.

The protein resides in the nucleus. Its function is as follows. Transcription factor. Interacts specifically with the W box (5'-(T)TGAC[CT]-3'), a frequently occurring elicitor-responsive cis-acting element. The protein is Probable WRKY transcription factor 7 (WRKY7) of Arabidopsis thaliana (Mouse-ear cress).